A 411-amino-acid polypeptide reads, in one-letter code: LL-diaminopimelate aminotransferase (411 aa).

Substrate-binding residues include tyrosine 15 and glycine 42. Pyridoxal 5'-phosphate is bound by residues tyrosine 72, 108 to 109 (SK), tyrosine 132, asparagine 187, tyrosine 218, and 246 to 248 (SFS). Residues lysine 109, tyrosine 132, and asparagine 187 each coordinate substrate. At lysine 249 the chain carries N6-(pyridoxal phosphate)lysine. Positions 257 and 292 each coordinate pyridoxal 5'-phosphate. Residues asparagine 292 and arginine 388 each coordinate substrate.

It belongs to the class-I pyridoxal-phosphate-dependent aminotransferase family. LL-diaminopimelate aminotransferase subfamily. As to quaternary structure, homodimer. It depends on pyridoxal 5'-phosphate as a cofactor.

The enzyme catalyses (2S,6S)-2,6-diaminopimelate + 2-oxoglutarate = (S)-2,3,4,5-tetrahydrodipicolinate + L-glutamate + H2O + H(+). It functions in the pathway amino-acid biosynthesis; L-lysine biosynthesis via DAP pathway; LL-2,6-diaminopimelate from (S)-tetrahydrodipicolinate (aminotransferase route): step 1/1. Involved in the synthesis of meso-diaminopimelate (m-DAP or DL-DAP), required for both lysine and peptidoglycan biosynthesis. Catalyzes the direct conversion of tetrahydrodipicolinate to LL-diaminopimelate. This chain is LL-diaminopimelate aminotransferase, found in Cyanothece sp. (strain PCC 7425 / ATCC 29141).